Reading from the N-terminus, the 289-residue chain is Shikimate dehydrogenase (NADP(+)) (289 aa).

Shikimate is bound by residues 22 to 24 (SRS) and Thr-69. Lys-73 (proton acceptor) is an active-site residue. Glu-85 lines the NADP(+) pocket. Shikimate is bound by residues Asn-94 and Asp-109. NADP(+) is bound by residues 134–138 (GAGGA), 158–163 (NRTLSR), and Ile-226. Tyr-228 serves as a coordination point for shikimate. Gly-249 contacts NADP(+).

The protein belongs to the shikimate dehydrogenase family. In terms of assembly, homodimer.

The catalysed reaction is shikimate + NADP(+) = 3-dehydroshikimate + NADPH + H(+). It participates in metabolic intermediate biosynthesis; chorismate biosynthesis; chorismate from D-erythrose 4-phosphate and phosphoenolpyruvate: step 4/7. Involved in the biosynthesis of the chorismate, which leads to the biosynthesis of aromatic amino acids. Catalyzes the reversible NADPH linked reduction of 3-dehydroshikimate (DHSA) to yield shikimate (SA). The protein is Shikimate dehydrogenase (NADP(+)) of Brucella ovis (strain ATCC 25840 / 63/290 / NCTC 10512).